Consider the following 434-residue polypeptide: Transcription elongation factor B polypeptide 3 (434 aa).

The segment at 142 to 161 (KPEPVDVHEQQASSSSMSYQ) is disordered. Polar residues predominate over residues 151 to 160 (QQASSSSMSY). Residues 221-230 (TLVSLCQTVL) are BC box. An F-box domain is found at 237-281 (IDHVGIVPFDLLKPVLDHASTDQLRHILDVNPMLVEDADEMFHEM). A disordered region spans residues 391–415 (ITPRGGGVPSTSRSRSNNNNNMNNG).

As to quaternary structure, heterotrimer of an A, B and C subunit.

It is found in the nucleus. In terms of biological role, SIII, also known as elongin, is a general transcription elongation factor that increases the RNA polymerase II transcription elongation past template-encoded arresting sites. Subunit A is transcriptionally active and its transcription activity is strongly enhanced by binding to the dimeric complex of the SIII regulatory subunits B and C (elongin BC complex). The chain is Transcription elongation factor B polypeptide 3 from Caenorhabditis elegans.